Consider the following 365-residue polypeptide: Putative clathrin assembly protein At4g40080 (365 aa).

Residues 29 to 167 (NTKSKTLSFH…STSRIMGFFI (139 aa)) form the ENTH domain.

It is found in the membrane. It localises to the clathrin-coated pit. The protein resides in the golgi apparatus. Its subcellular location is the cytoplasmic vesicle. The protein localises to the clathrin-coated vesicle. This is Putative clathrin assembly protein At4g40080 from Arabidopsis thaliana (Mouse-ear cress).